The primary structure comprises 222 residues: uncharacterized protein (222 aa).

The disordered stretch occupies residues 142–222 (ARRGGCVHPP…LPDPPSAGHL (81 aa)). The span at 160–169 (QSRSISSRRA) shows a compositional bias: low complexity. The span at 182-196 (PRRRPHRHRTRPQTR) shows a compositional bias: basic residues.

Belongs to the Rv1128c/1148c/1588c/1702c/1945/3466 family.

This is an uncharacterized protein from Mycobacterium tuberculosis (strain CDC 1551 / Oshkosh).